The chain runs to 182 residues: MSDVGYCSPPGKNNSDYLTAFHCVSREMCNIVSNIQLSDGTKVNVIKTPYMKHCSNILCRLLFEIGLNRLFPMCIEDEDLAWISAGNNIGPTKGVLFAGSLGSIYGSIAIFSGDLIVGKKYKVISRDFYIGKTIEWETTINGKGIFYVLYENGKGIWIRGYYSFPTQVRIKPGFSGSPVIEE.

This is an uncharacterized protein from Thermoproteus tenax (TTV1).